The following is a 122-amino-acid chain: Small ribosomal subunit protein uS13 (122 aa).

The interval glycine 95–lysine 122 is disordered.

This sequence belongs to the universal ribosomal protein uS13 family. In terms of assembly, part of the 30S ribosomal subunit. Forms a loose heterodimer with protein S19. Forms two bridges to the 50S subunit in the 70S ribosome.

In terms of biological role, located at the top of the head of the 30S subunit, it contacts several helices of the 16S rRNA. In the 70S ribosome it contacts the 23S rRNA (bridge B1a) and protein L5 of the 50S subunit (bridge B1b), connecting the 2 subunits; these bridges are implicated in subunit movement. Contacts the tRNAs in the A and P-sites. The polypeptide is Small ribosomal subunit protein uS13 (Lawsonia intracellularis (strain PHE/MN1-00)).